Reading from the N-terminus, the 323-residue chain is Olfactory receptor 2AE1 (323 aa).

The Extracellular portion of the chain corresponds to 1-25; the sequence is MWQKNQTSLADFILEGLFDDSLTHL. Asparagine 5 is a glycosylation site (N-linked (GlcNAc...) asparagine). Residues 26–49 form a helical membrane-spanning segment; that stretch reads FLFSLTMVVFLIAVSGNTLTILLI. Over 50 to 57 the chain is Cytoplasmic; the sequence is CIDPQLHT. A helical transmembrane segment spans residues 58–79; the sequence is PMYFLLSQLSLMDLMHVSTIIL. Residues 80–100 are Extracellular-facing; sequence KMATNYLSGKKSISFVGCATQ. Cysteine 97 and cysteine 189 form a disulfide bridge. A helical membrane pass occupies residues 101–120; it reads HFLYLCLGGAECFLLAVMSY. Residues 121–139 lie on the Cytoplasmic side of the membrane; the sequence is DRYVAICHPLRYAVLMNKK. A helical membrane pass occupies residues 140–158; that stretch reads VGLMMAVMSWLGASVNSLI. At 159 to 195 the chain is on the extracellular side; sequence HMAILMHFPFCGPRKVYHFYCEFPAVVKLVCGDITVY. A helical transmembrane segment spans residues 196–218; that stretch reads ETTVYISSILLLLPIFLISTSYV. Residues 219–235 are Cytoplasmic-facing; that stretch reads FILQSVIQMRSSGSKRN. The chain crosses the membrane as a helical span at residues 236 to 258; it reads AFATCGSHLTVVSLWFGACIFSY. Topologically, residues 259–271 are extracellular; the sequence is MRPRSQCTLLQNK. A helical membrane pass occupies residues 272–291; that stretch reads VGSVFYSIITPTLNSLIYTL. The Cytoplasmic segment spans residues 292-323; it reads RNKDVAKALRRVLRRDVITQCIQRLQLWLPRV.

It belongs to the G-protein coupled receptor 1 family.

It localises to the cell membrane. Its function is as follows. Odorant receptor. The chain is Olfactory receptor 2AE1 (OR2AE1) from Homo sapiens (Human).